We begin with the raw amino-acid sequence, 37 residues long: Large ribosomal subunit protein bL36 (37 aa).

The protein belongs to the bacterial ribosomal protein bL36 family.

The protein is Large ribosomal subunit protein bL36 of Thermobifida fusca (strain YX).